Consider the following 236-residue polypeptide: DNA repair and recombination protein RadB (236 aa).

The protein belongs to the eukaryotic RecA-like protein family. RadB subfamily.

Involved in DNA repair and in homologous recombination. May regulate the cleavage reactions of the branch-structured DNA. Has a very weak ATPase activity that is not stimulated by DNA. Binds DNA but does not promote DNA strands exchange. This is DNA repair and recombination protein RadB from Halobacterium salinarum (strain ATCC 29341 / DSM 671 / R1).